Here is a 304-residue protein sequence, read N- to C-terminus: Hairy/enhancer-of-split related with YRPW motif protein 1 (304 aa).

Positions 1 to 52 (MKRAHPDYSSSDSELDETVEVEKESADENGNLSSALGSMSPTTSSQILARKR) are disordered. Residues 28–47 (ENGNLSSALGSMSPTTSSQI) are compositionally biased toward polar residues. The interval 48–117 (LARKRRRGII…GGKGYFDAHA (70 aa)) is transcriptional repression and interaction with NCOR1 and SIN3A. Positions 49–104 (ARKRRRGIIEKRRRDRINNSLSELRRLVPSAFEKQGSAKLEKAEILQMTVDHLKML) constitute a bHLH domain. In terms of domain architecture, Orange spans 122 to 158 (YRSLGFRECLAEVARYLSIIEGLDASDPLRVRLVSHL). The tract at residues 191-234 (AHPLLLPQSGHGNTGTSASPTDPHHQGRLAAAHPEAPALRAPPS) is disordered. Residues 200–210 (GHGNTGTSASP) show a composition bias toward polar residues. A compositionally biased stretch (low complexity) spans 218 to 234 (RLAAAHPEAPALRAPPS).

The protein belongs to the HEY family. As to quaternary structure, self-associates. Interacts with HES1 and HEYL. Interacts with HDAC1, NCOR1 and SIN3A. Interacts with GATA4 and GATA6. Interacts with CCDC89/BOIP.

It localises to the nucleus. In terms of biological role, transcriptional repressor which binds preferentially to the canonical E box sequence 5'-CACGTG-3'. Downstream effector of Notch signaling required for cardiovascular development. Specifically required for the Notch-induced endocardial epithelial to mesenchymal transition, which is itself criticial for cardiac valve and septum development. May be required in conjunction with HEY2 to specify arterial cell fate or identity. Promotes maintenance of neuronal precursor cells and glial versus neuronal fate specification. Represses transcription by the cardiac transcriptional activators GATA4 and GATA6 and by the neuronal bHLH factors ASCL1/MASH1 and NEUROD4/MATH3. This is Hairy/enhancer-of-split related with YRPW motif protein 1 (HEY1) from Canis lupus familiaris (Dog).